The primary structure comprises 546 residues: Chaperonin GroEL 2 (546 aa).

Residues 30 to 33 (TLGP), Lys-51, 87 to 91 (DGTTT), Gly-415, 479 to 481 (NAA), and Asp-495 each bind ATP. Positions 524–546 (APKDAPPAQPAGVPGAGGTGFDF) are disordered. Gly residues predominate over residues 537–546 (PGAGGTGFDF).

The protein belongs to the chaperonin (HSP60) family. Forms a cylinder of 14 subunits composed of two heptameric rings stacked back-to-back. Interacts with the co-chaperonin GroES.

Its subcellular location is the cytoplasm. The enzyme catalyses ATP + H2O + a folded polypeptide = ADP + phosphate + an unfolded polypeptide.. Together with its co-chaperonin GroES, plays an essential role in assisting protein folding. The GroEL-GroES system forms a nano-cage that allows encapsulation of the non-native substrate proteins and provides a physical environment optimized to promote and accelerate protein folding. This Burkholderia thailandensis (strain ATCC 700388 / DSM 13276 / CCUG 48851 / CIP 106301 / E264) protein is Chaperonin GroEL 2.